The following is a 219-amino-acid chain: Lipid A acyltransferase PagP (219 aa).

Residues Met1–Ala28 form the signal peptide. Residues Ile39–Phe63 form a disordered region. Basic and acidic residues predominate over residues Thr49 to Pro59. Residues His91, Asp134, and Ser135 contribute to the active site.

The protein belongs to the lipid A palmitoyltransferase family. In terms of assembly, homodimer.

It localises to the cell outer membrane. It catalyses the reaction a lipid A + a 1,2-diacyl-sn-glycero-3-phosphocholine = a hepta-acyl lipid A + a 2-acyl-sn-glycero-3-phosphocholine. It carries out the reaction a lipid IVA + a 1,2-diacyl-sn-glycero-3-phosphocholine = a lipid IVB + a 2-acyl-sn-glycero-3-phosphocholine. The enzyme catalyses a lipid IIA + a 1,2-diacyl-sn-glycero-3-phosphocholine = a lipid IIB + a 2-acyl-sn-glycero-3-phosphocholine. Transfers a fatty acid residue from the sn-1 position of a phospholipid to the N-linked hydroxyfatty acid chain on the proximal unit of lipid A or its precursors. This is Lipid A acyltransferase PagP from Dickeya zeae (strain Ech586) (Dickeya dadantii (strain Ech586)).